Consider the following 556-residue polypeptide: Non-structural maintenance of chromosome element 5 (556 aa).

Component of the Smc5-Smc6 complex which consists of KRE29, MMS21, NSE1, NSE3, NSE4, NSE5, SMC5 and SMC6. Interacts with KRE29.

Its subcellular location is the nucleus. It localises to the chromosome. Acts in a DNA repair pathway for removal of UV-induced DNA damage that is distinct from classical nucleotide excision repair and in repair of ionizing radiation damage. Functions in homologous recombination repair of DNA double strand breaks and in recovery of stalled replication forks. The polypeptide is Non-structural maintenance of chromosome element 5 (NSE5) (Saccharomyces cerevisiae (strain ATCC 204508 / S288c) (Baker's yeast)).